A 486-amino-acid polypeptide reads, in one-letter code: MNNKKKNINTISIIKMNDIKNIHFIGIGGCSMGGIAEILLKSGYNISGSDIVSNNITQQLSKLGAKIFFKHTEKNINRSDVIVISSAISCNNPEIIKAKKLNIPVISRAEMIAEIIRYKYNIAISGTHGKTSTTAIIFSIFEDSNLSPTLINGGYLKSINSNIKIGKNPFYCIVEADESDASFLHLKPITIILTNIEKDHIETYNGSFHNLKLAFIKFIHNLPFYGTAIMCIDNHAVQTILPYIKRNIITYGFSSNADVRIDRYVQKKFTSRFIVIRVNKPTLNVTLNLPGRHNALNATAAICVATQENIDDKNIIQSLKNFQGVQRRFELSKTFTINSKSHRKKEIMLINDYGHHPTEILESIHTARFGWPKKKLLMIFQPHRYTRTKNFLFSFSKTLSNVDELFILEVYAANEAIIPGADSTSLYKTIKKNKKNFVTLILDLNKLFLNIMSKLSDSNLILVQGAGNVDNIVKTFFIKKLKQYKN.

126 to 132 (GTHGKTS) serves as a coordination point for ATP.

Belongs to the MurCDEF family.

Its subcellular location is the cytoplasm. It carries out the reaction UDP-N-acetyl-alpha-D-muramate + L-alanine + ATP = UDP-N-acetyl-alpha-D-muramoyl-L-alanine + ADP + phosphate + H(+). It participates in cell wall biogenesis; peptidoglycan biosynthesis. Functionally, cell wall formation. The sequence is that of UDP-N-acetylmuramate--L-alanine ligase from Buchnera aphidicola subsp. Baizongia pistaciae (strain Bp).